We begin with the raw amino-acid sequence, 88 residues long: Cell division topological specificity factor (88 aa).

It belongs to the MinE family.

In terms of biological role, prevents the cell division inhibition by proteins MinC and MinD at internal division sites while permitting inhibition at polar sites. This ensures cell division at the proper site by restricting the formation of a division septum at the midpoint of the long axis of the cell. The sequence is that of Cell division topological specificity factor from Clostridium novyi (strain NT).